A 369-amino-acid polypeptide reads, in one-letter code: MSDAYKLLVLAGDGIGPEVMREVARIVHWMSAHRGLKLEITEELVGAASLAVHGVPIRDEVIELARQSDAVLFGSVGDPAWSHVGFDKRPEVAILKLRKELELFANLRPAKLFDALIDASALKPEVVRGLDLMIVRETVGGIYFGEPRGIETLPDGSRRGINTEVYTTSEIERVARVAFDLARKRDNRVCSVEKCNVMESGLLWKEVVTDVHKREYPDVQLSHMLADNCAMQLVRDPNQFDVIVTGNLFGDILSDLASMLTGSLGMLPSATLGPVRADGKRNALYEPIHGSAPDIAGKGIANPLAQILSFAMLLRYSLNRAEDADLIEMAVSNVLASGLRTGDIMSPGMARVGTEMMGQAVLREMEKLA.

Substrate is bound by residues Arg-98, Arg-108, Arg-136, and Asp-227. Asp-227, Asp-251, and Asp-255 together coordinate Mg(2+). An NAD(+)-binding site is contributed by 290 to 302 (GSAPDIAGKGIAN).

Belongs to the isocitrate and isopropylmalate dehydrogenases family. LeuB type 1 subfamily. In terms of assembly, homodimer. Requires Mg(2+) as cofactor. The cofactor is Mn(2+).

It is found in the cytoplasm. The enzyme catalyses (2R,3S)-3-isopropylmalate + NAD(+) = 4-methyl-2-oxopentanoate + CO2 + NADH. It participates in amino-acid biosynthesis; L-leucine biosynthesis; L-leucine from 3-methyl-2-oxobutanoate: step 3/4. Catalyzes the oxidation of 3-carboxy-2-hydroxy-4-methylpentanoate (3-isopropylmalate) to 3-carboxy-4-methyl-2-oxopentanoate. The product decarboxylates to 4-methyl-2 oxopentanoate. The polypeptide is 3-isopropylmalate dehydrogenase (Gluconobacter oxydans (strain 621H) (Gluconobacter suboxydans)).